The primary structure comprises 174 residues: MALREIIILPDKQLRLVSKPIEKVTTEIRKLADDMFETMYDAPGIGLAAIQIAQPLRLITMDLAKRDENGETKPEPRVFINPEVIASSEELSVYEEGCLSIPEYYEEVERPAKVRVRFTDLDGKVHEEDAEGLYATCIQHEIDHLNGVLFVDYLSKLKRDRVLKKFEKAAKRAE.

Fe cation-binding residues include cysteine 98 and histidine 140. Glutamate 141 is a catalytic residue. Histidine 144 lines the Fe cation pocket.

Belongs to the polypeptide deformylase family. Requires Fe(2+) as cofactor.

The catalysed reaction is N-terminal N-formyl-L-methionyl-[peptide] + H2O = N-terminal L-methionyl-[peptide] + formate. Removes the formyl group from the N-terminal Met of newly synthesized proteins. Requires at least a dipeptide for an efficient rate of reaction. N-terminal L-methionine is a prerequisite for activity but the enzyme has broad specificity at other positions. This is Peptide deformylase from Bradyrhizobium diazoefficiens (strain JCM 10833 / BCRC 13528 / IAM 13628 / NBRC 14792 / USDA 110).